Here is a 206-residue protein sequence, read N- to C-terminus: Large ribosomal subunit protein bL25 (206 aa).

The interval 1–91 (MEYRLKAYYR…RPEHVDFFVL (91 aa)) is bL25 domain. The tract at residues 92 to 206 (SDEPVEMYVP…IKKGKEEEEE (115 aa)) is CTC domain. The disordered stretch occupies residues 184–206 (AEEAAAEVAEPEVIKKGKEEEEE). The segment covering 195 to 206 (EVIKKGKEEEEE) has biased composition (basic and acidic residues).

The protein belongs to the bacterial ribosomal protein bL25 family. CTC subfamily. Part of the 50S ribosomal subunit. Contacts the 5S rRNA.

This is one of 3 proteins that mediate the attachment of the 5S rRNA onto the large ribosomal subunit. This chain is Large ribosomal subunit protein bL25 (rplY), found in Thermus thermophilus.